Reading from the N-terminus, the 282-residue chain is Acetyl-coenzyme A carboxylase carboxyl transferase subunit beta (282 aa).

A CoA carboxyltransferase N-terminal domain is found at 29–282 (LMQRCPNCGL…LLKYGGMQDD (254 aa)). Residues Cys33, Cys36, Cys51, and Cys54 each coordinate Zn(2+). Residues 33–54 (CPNCGLEFFARRLDKYKTCPDC) form a C4-type zinc finger.

It belongs to the AccD/PCCB family. In terms of assembly, acetyl-CoA carboxylase is a heterohexamer composed of biotin carboxyl carrier protein (AccB), biotin carboxylase (AccC) and two subunits each of ACCase subunit alpha (AccA) and ACCase subunit beta (AccD). Zn(2+) serves as cofactor.

It localises to the cytoplasm. The enzyme catalyses N(6)-carboxybiotinyl-L-lysyl-[protein] + acetyl-CoA = N(6)-biotinyl-L-lysyl-[protein] + malonyl-CoA. Its pathway is lipid metabolism; malonyl-CoA biosynthesis; malonyl-CoA from acetyl-CoA: step 1/1. Component of the acetyl coenzyme A carboxylase (ACC) complex. Biotin carboxylase (BC) catalyzes the carboxylation of biotin on its carrier protein (BCCP) and then the CO(2) group is transferred by the transcarboxylase to acetyl-CoA to form malonyl-CoA. This chain is Acetyl-coenzyme A carboxylase carboxyl transferase subunit beta, found in Lactobacillus delbrueckii subsp. bulgaricus (strain ATCC BAA-365 / Lb-18).